Reading from the N-terminus, the 377-residue chain is [2-(trimethylamino)ethyl]phosphonate dioxygenase (377 aa).

The tract at residues 95–119 (DTDQSSEVGRTSPDVETWDSSQPAP) is disordered. Asn187 is a [2-(trimethylamino)ethyl]phosphonate binding site. His198 contacts 2-oxoglutarate. Fe(2+) is bound by residues His198 and Asp200. [2-(trimethylamino)ethyl]phosphonate is bound by residues Asp200, Asn201, Tyr203, Asn286, and Arg288. Residues His341, Arg343, and Arg352 each coordinate 2-oxoglutarate. Residue His341 coordinates Fe(2+).

Belongs to the gamma-BBH/TMLD family. As to quaternary structure, homodimer. Requires Fe(2+) as cofactor. L-ascorbate is required as a cofactor.

It catalyses the reaction [2-(trimethylamino)ethyl]phosphonate + 2-oxoglutarate + O2 = [(1R)-1-hydroxy-2-(trimethylamino)ethyl]phosphonate + succinate + CO2. Its function is as follows. Involved in the degradation of the naturally occurring organophosphonate 2-(trimethylammonio)ethylphosphonate (TMAEP). Catalyzes the hydroxylation of TMAEP to (R)-1-hydroxy-2-(trimethylammonio)ethylphosphonate (OH-TMAEP). Is highly specific for its N-trimethylated substrate. Cannot use gamma-butyrobetaine as substrate. The polypeptide is [2-(trimethylamino)ethyl]phosphonate dioxygenase (Leisingera caerulea (Phaeobacter caeruleus)).